Reading from the N-terminus, the 539-residue chain is Glucose-6-phosphate isomerase (539 aa).

The active-site Proton donor is the glutamate 349. Residues histidine 380 and lysine 508 contribute to the active site.

The protein belongs to the GPI family.

The protein localises to the cytoplasm. It carries out the reaction alpha-D-glucose 6-phosphate = beta-D-fructose 6-phosphate. It functions in the pathway carbohydrate biosynthesis; gluconeogenesis. Its pathway is carbohydrate degradation; glycolysis; D-glyceraldehyde 3-phosphate and glycerone phosphate from D-glucose: step 2/4. In terms of biological role, catalyzes the reversible isomerization of glucose-6-phosphate to fructose-6-phosphate. The sequence is that of Glucose-6-phosphate isomerase from Caulobacter sp. (strain K31).